A 785-amino-acid chain; its full sequence is Putative endonuclease MutS2 (785 aa).

335–342 (GPNTGGKT) serves as a coordination point for ATP. Residues 513–586 (TAEHNEVDTM…AEKVKAAMKE (74 aa)) are a coiled coil. The partially complements a deletion for mitomycin C (MMC) resistance and for chromosomal DNA transformation stretch occupies residues 636–785 (KRDFKPGDEV…GSGVTVVELK (150 aa)). Residues 641-681 (PGDEVKVLTFGQKGTLLEKTGGNEWNVQIGILKMKVKEKDL) are KOW region. One can recognise a Smr domain in the interval 710–785 (LDLRGERYEN…GSGVTVVELK (76 aa)).

This sequence belongs to the DNA mismatch repair MutS family. MutS2 subfamily. As to quaternary structure, binds to ribosomes as a homodimer. Binds to stalled/collided disomes, association is greater in (ribosome-targeted) antibiotic-treated cells (with increased stalling at specific mRNA sites). The clamp domain of one monomer binds the A-site finger, the 23S rRNA of the central protuberance and ribosomal protein uL5 of the leading (stalled) ribosome, while the other monomer binds in a gap between the ribosomal central protuberance and the L1 stalk of the leading ribosome.

The protein localises to the cytoplasm. Functionally, acts as a ribosome collision sensor splitting the ribosome into its 2 subunits. Detects stalled/collided disomes (pairs of ribosomes where the leading ribosome is stalled and a second ribosome has collided with it) which it binds and splits, by an ATP-hydrolysis driven conformational change. Does not seem to have endoribonuclease activity (in the context of ribosome stalling). Acts upstream of the ribosome quality control system (RQC), a ribosome-associated complex that mediates the extraction of incompletely synthesized nascent chains from stalled ribosomes and their subsequent degradation, probably generates substrates for RQC. Its function is as follows. Does not seem to be involved in mismatch repair or in the prevention of interspecific recombination during DNA transformation. Might be involved in homologous recombination. Putative endonuclease that may be involved in the suppression of homologous recombination and may therefore have a key role in the control of bacterial genetic diversity. This is Putative endonuclease MutS2 from Bacillus subtilis (strain 168).